The primary structure comprises 175 residues: uncharacterized protein (175 aa).

A DNL-type zinc finger spans residues 71–166; the sequence is QPKPTYNVSF…KPPQFKIRPA (96 aa). Zn(2+) contacts are provided by C82, C85, C107, and C110.

This is an uncharacterized protein from Schizosaccharomyces pombe (strain 972 / ATCC 24843) (Fission yeast).